The primary structure comprises 185 residues: MINDIKKDAQERMGKSIEALGRNLASIRTGRAHPSILDSVKVPAWGSDMPLNQVAAITVEDARTLKIVAHDKNLSAAIEKAILTSDLGLNPSSAGTTIRVPMPALTEETRKGYTKQASSVAEDAKVAVRNVRRDALADLKKLTKDKEISEDEERRAADEIQKLTDKFVAEIDAAFKAKEKDLLAV.

The protein belongs to the RRF family.

The protein localises to the cytoplasm. Its function is as follows. Responsible for the release of ribosomes from messenger RNA at the termination of protein biosynthesis. May increase the efficiency of translation by recycling ribosomes from one round of translation to another. The polypeptide is Ribosome-recycling factor (Pseudomonas entomophila (strain L48)).